The primary structure comprises 150 residues: Putative F-box protein At2g33655 (150 aa).

The region spanning 1–47 (MEKMSDLPRELVEEILSRVPVKSMREVRVTCKTWNALSKHISKAEAA) is the F-box domain.

This Arabidopsis thaliana (Mouse-ear cress) protein is Putative F-box protein At2g33655.